The primary structure comprises 254 residues: 3-deoxy-manno-octulosonate cytidylyltransferase (254 aa).

The protein belongs to the KdsB family.

It is found in the cytoplasm. The enzyme catalyses 3-deoxy-alpha-D-manno-oct-2-ulosonate + CTP = CMP-3-deoxy-beta-D-manno-octulosonate + diphosphate. Its pathway is nucleotide-sugar biosynthesis; CMP-3-deoxy-D-manno-octulosonate biosynthesis; CMP-3-deoxy-D-manno-octulosonate from 3-deoxy-D-manno-octulosonate and CTP: step 1/1. The protein operates within bacterial outer membrane biogenesis; lipopolysaccharide biosynthesis. In terms of biological role, activates KDO (a required 8-carbon sugar) for incorporation into bacterial lipopolysaccharide in Gram-negative bacteria. The chain is 3-deoxy-manno-octulosonate cytidylyltransferase from Bordetella bronchiseptica (strain ATCC BAA-588 / NCTC 13252 / RB50) (Alcaligenes bronchisepticus).